The chain runs to 261 residues: Cytochrome c oxidase subunit 3 (261 aa).

The Mitochondrial matrix portion of the chain corresponds to 1-15 (MTHQTHAYHMVNPSP). Residues 16-34 (WPLTGALSALLMTSGLAMW) traverse the membrane as a helical segment. Over 35-40 (FHFNST) the chain is Mitochondrial intermembrane. A helical membrane pass occupies residues 41–66 (ILLMIGLTTNTLTMYQWWRDVIREST). The Mitochondrial matrix portion of the chain corresponds to 67–72 (FQGHHT). Residues 73-105 (PTVQKGLRYGMILFIISEVLFFTGFFWAFYHSS) traverse the membrane as a helical segment. Residues 106-128 (LAPTPELGGCWPPTGIHPLNPLE) are Mitochondrial intermembrane-facing. A helical membrane pass occupies residues 129–152 (VPLLNTSVLLASGVSITWAHHSLM). Over 153-155 (EGN) the chain is Mitochondrial matrix. Residues 156-183 (RYPMLQALFITIALGVYFTLLQASEYYE) traverse the membrane as a helical segment. Residues 184-190 (APFTISD) are Mitochondrial intermembrane-facing. A helical membrane pass occupies residues 191 to 223 (GIYGSTFFVATGFHGLHVIIGSTFLIVCFFRQL). Residues 224 to 232 (KFHFTSNHH) lie on the Mitochondrial matrix side of the membrane. A helical transmembrane segment spans residues 233 to 256 (FGFEAAAWYWHFVDVVWLFLYVSI). Over 257 to 261 (YWWGS) the chain is Mitochondrial intermembrane.

Belongs to the cytochrome c oxidase subunit 3 family. In terms of assembly, component of the cytochrome c oxidase (complex IV, CIV), a multisubunit enzyme composed of 14 subunits. The complex is composed of a catalytic core of 3 subunits MT-CO1, MT-CO2 and MT-CO3, encoded in the mitochondrial DNA, and 11 supernumerary subunits COX4I, COX5A, COX5B, COX6A, COX6B, COX6C, COX7A, COX7B, COX7C, COX8 and NDUFA4, which are encoded in the nuclear genome. The complex exists as a monomer or a dimer and forms supercomplexes (SCs) in the inner mitochondrial membrane with NADH-ubiquinone oxidoreductase (complex I, CI) and ubiquinol-cytochrome c oxidoreductase (cytochrome b-c1 complex, complex III, CIII), resulting in different assemblies (supercomplex SCI(1)III(2)IV(1) and megacomplex MCI(2)III(2)IV(2)).

The protein localises to the mitochondrion inner membrane. The enzyme catalyses 4 Fe(II)-[cytochrome c] + O2 + 8 H(+)(in) = 4 Fe(III)-[cytochrome c] + 2 H2O + 4 H(+)(out). In terms of biological role, component of the cytochrome c oxidase, the last enzyme in the mitochondrial electron transport chain which drives oxidative phosphorylation. The respiratory chain contains 3 multisubunit complexes succinate dehydrogenase (complex II, CII), ubiquinol-cytochrome c oxidoreductase (cytochrome b-c1 complex, complex III, CIII) and cytochrome c oxidase (complex IV, CIV), that cooperate to transfer electrons derived from NADH and succinate to molecular oxygen, creating an electrochemical gradient over the inner membrane that drives transmembrane transport and the ATP synthase. Cytochrome c oxidase is the component of the respiratory chain that catalyzes the reduction of oxygen to water. Electrons originating from reduced cytochrome c in the intermembrane space (IMS) are transferred via the dinuclear copper A center (CU(A)) of subunit 2 and heme A of subunit 1 to the active site in subunit 1, a binuclear center (BNC) formed by heme A3 and copper B (CU(B)). The BNC reduces molecular oxygen to 2 water molecules using 4 electrons from cytochrome c in the IMS and 4 protons from the mitochondrial matrix. This chain is Cytochrome c oxidase subunit 3 (MT-CO3), found in Raphicerus melanotis (Cape grysbok).